Reading from the N-terminus, the 161-residue chain is Nucleotide-binding protein GM21_0633 (161 aa).

This sequence belongs to the YajQ family.

In terms of biological role, nucleotide-binding protein. The protein is Nucleotide-binding protein GM21_0633 of Geobacter sp. (strain M21).